A 392-amino-acid polypeptide reads, in one-letter code: Phosphoglycerate kinase (392 aa).

Residues 21–23, R36, 59–62, R117, and R150 contribute to the substrate site; these read DFN and HLGR. Residues K200, G288, E319, and 345-348 each bind ATP; that span reads GGDS.

This sequence belongs to the phosphoglycerate kinase family. In terms of assembly, monomer.

The protein localises to the cytoplasm. The catalysed reaction is (2R)-3-phosphoglycerate + ATP = (2R)-3-phospho-glyceroyl phosphate + ADP. It participates in carbohydrate degradation; glycolysis; pyruvate from D-glyceraldehyde 3-phosphate: step 2/5. In Rubrobacter xylanophilus (strain DSM 9941 / JCM 11954 / NBRC 16129 / PRD-1), this protein is Phosphoglycerate kinase.